The following is a 477-amino-acid chain: Lactate utilization protein B (477 aa).

4Fe-4S ferredoxin-type domains are found at residues 304–334 (GTQF…GHSY) and 353–382 (YDTY…LHDL). Cys313, Cys316, Cys319, Cys323, Cys366, Cys369, and Cys373 together coordinate [4Fe-4S] cluster. A disordered region spans residues 443 to 463 (GPKPLQAWTNSRDFPMPDDEN).

This sequence belongs to the LutB/YkgF family.

Is involved in L-lactate degradation and allows cells to grow with lactate as the sole carbon source. Has probably a role as an electron transporter during oxidation of L-lactate. The sequence is that of Lactate utilization protein B from Macrococcus caseolyticus (strain JCSC5402) (Macrococcoides caseolyticum).